The following is a 71-amino-acid chain: Sodium channel neurotoxin MeuNaTxalpha-12 (71 aa).

Positions 1–6 (MTGVES) are cleaved as a signal peptide. The region spanning 8–70 (RDAYIAQGNN…VPIRIQGKCQ (63 aa)) is the LCN-type CS-alpha/beta domain. Disulfide bonds link Cys-18-Cys-69, Cys-22-Cys-42, Cys-28-Cys-52, and Cys-32-Cys-54. Arg-71 is a propeptide (removed by a carboxypeptidase).

It belongs to the long (4 C-C) scorpion toxin superfamily. Sodium channel inhibitor family. Alpha subfamily. Expressed by the venom gland.

Its subcellular location is the secreted. Functionally, alpha toxins bind voltage-independently at site-3 of sodium channels (Nav) and inhibit the inactivation of the activated channels, thereby blocking neuronal transmission. In Mesobuthus eupeus (Lesser Asian scorpion), this protein is Sodium channel neurotoxin MeuNaTxalpha-12.